A 313-amino-acid polypeptide reads, in one-letter code: 7,8-didemethyl-8-hydroxy-5-deazariboflavin synthase (313 aa).

The region spanning 4–235 is the Radical SAM core domain; sequence ITYSPAYTLV…AEITLQIPPN (232 aa). [4Fe-4S] cluster contacts are provided by C18, C22, and C25.

It belongs to the radical SAM superfamily. CofG family. Consists of two subunits, CofG and CofH. [4Fe-4S] cluster is required as a cofactor.

The catalysed reaction is 5-amino-5-(4-hydroxybenzyl)-6-(D-ribitylimino)-5,6-dihydrouracil + S-adenosyl-L-methionine = 7,8-didemethyl-8-hydroxy-5-deazariboflavin + 5'-deoxyadenosine + L-methionine + NH4(+) + H(+). It functions in the pathway cofactor biosynthesis; coenzyme F0 biosynthesis. Catalyzes the radical-mediated synthesis of 7,8-didemethyl-8-hydroxy-5-deazariboflavin from 5-amino-5-(4-hydroxybenzyl)-6-(D-ribitylimino)-5,6-dihydrouracil. The sequence is that of 7,8-didemethyl-8-hydroxy-5-deazariboflavin synthase from Synechocystis sp. (strain ATCC 27184 / PCC 6803 / Kazusa).